We begin with the raw amino-acid sequence, 227 residues long: MTNNLSGYRNKFVRVKTSKKRTVSSSNWLRRQLNDPYVAKARIDGFRSRAAYKLLEIHEKFKLFTPNMKIVDLGAAPGGWSQVASKLIKASDNNLNNKIISIDVLEIEHVAGVEFVQKDFFEADTEELIIQALDGRADIVMSDMASNTIGHKATDHIRTLLLCEQAFEFALKVLKPSGHFIAKIFRGGAENELLHKVKREFKTVKHFKPSSSRSESTEIYLVALNKK.

5 residues coordinate S-adenosyl-L-methionine: G78, W80, D103, D119, and D143. The Proton acceptor role is filled by K183.

Belongs to the class I-like SAM-binding methyltransferase superfamily. RNA methyltransferase RlmE family.

It localises to the cytoplasm. It catalyses the reaction uridine(2552) in 23S rRNA + S-adenosyl-L-methionine = 2'-O-methyluridine(2552) in 23S rRNA + S-adenosyl-L-homocysteine + H(+). Functionally, specifically methylates the uridine in position 2552 of 23S rRNA at the 2'-O position of the ribose in the fully assembled 50S ribosomal subunit. This Rickettsia conorii (strain ATCC VR-613 / Malish 7) protein is Ribosomal RNA large subunit methyltransferase E.